We begin with the raw amino-acid sequence, 302 residues long: Phosphoribosylaminoimidazole-succinocarboxamide synthase (302 aa).

Belongs to the SAICAR synthetase family.

The catalysed reaction is 5-amino-1-(5-phospho-D-ribosyl)imidazole-4-carboxylate + L-aspartate + ATP = (2S)-2-[5-amino-1-(5-phospho-beta-D-ribosyl)imidazole-4-carboxamido]succinate + ADP + phosphate + 2 H(+). It participates in purine metabolism; IMP biosynthesis via de novo pathway; 5-amino-1-(5-phospho-D-ribosyl)imidazole-4-carboxamide from 5-amino-1-(5-phospho-D-ribosyl)imidazole-4-carboxylate: step 1/2. This is Phosphoribosylaminoimidazole-succinocarboxamide synthase from Cupriavidus pinatubonensis (strain JMP 134 / LMG 1197) (Cupriavidus necator (strain JMP 134)).